The following is a 184-amino-acid chain: Protein MEH1 (184 aa).

A lipid anchor (N-myristoyl glycine) is attached at glycine 2. 2 S-palmitoyl cysteine lipidation sites follow: cysteine 7 and cysteine 8. Residues 30–71 are a coiled coil; that stretch reads QGNANDEYDAEQMRLKEHEHEQKLLAREQELRDIVANTNDKL. The interval 89–147 is disordered; it reads LQEALDKRQQEEGGDSREDERSAGDDNLSGHSVPSSGSAQATTHQTAPRTNTFTLLTSP. Basic and acidic residues predominate over residues 92–112; it reads ALDKRQQEEGGDSREDERSAG. Residues 117-147 are compositionally biased toward polar residues; that stretch reads SGHSVPSSGSAQATTHQTAPRTNTFTLLTSP. 2 positions are modified to phosphoserine: serine 146 and serine 149.

Component of the GSE complex composed of GTR1, GTR2, SLM4, MEH1 and LTV1. Component of the EGO complex, at least composed of GTR2, SLM4 and MEH1.

The protein localises to the vacuole membrane. Component of the GSE complex, a GTPase complex required for intracellular sorting of GAP1 out of the endosome. Component of the EGO complex, a complex involved in the regulation of microautophagy. The polypeptide is Protein MEH1 (MEH1) (Saccharomyces cerevisiae (strain ATCC 204508 / S288c) (Baker's yeast)).